A 436-amino-acid chain; its full sequence is GTPase Der (436 aa).

2 EngA-type G domains span residues 4–167 (PVIA…PKIE) and 176–351 (IRFS…ESHS). GTP contacts are provided by residues 10 to 17 (GRPNVGKS), 57 to 61 (DTGGI), 119 to 122 (NKVD), 182 to 189 (GRPNVGKS), 229 to 233 (DTAGM), and 294 to 297 (NKWD). In terms of domain architecture, KH-like spans 352–436 (IRIQTNVLND…PIHIIARARD (85 aa)).

This sequence belongs to the TRAFAC class TrmE-Era-EngA-EngB-Septin-like GTPase superfamily. EngA (Der) GTPase family. Associates with the 50S ribosomal subunit.

Its function is as follows. GTPase that plays an essential role in the late steps of ribosome biogenesis. In Bacillus cereus (strain ATCC 10987 / NRS 248), this protein is GTPase Der.